Reading from the N-terminus, the 340-residue chain is Glyceraldehyde-3-phosphate dehydrogenase (340 aa).

NAD(+) contacts are provided by residues 11–12 (TI) and Gly-109. 138 to 140 (SCN) contacts D-glyceraldehyde 3-phosphate. The active-site Nucleophile is Cys-139. Arg-167 serves as a coordination point for NAD(+). 193 to 194 (HA) is a binding site for D-glyceraldehyde 3-phosphate. An NAD(+)-binding site is contributed by Gln-300.

The protein belongs to the glyceraldehyde-3-phosphate dehydrogenase family. Homotetramer.

The protein resides in the cytoplasm. It carries out the reaction D-glyceraldehyde 3-phosphate + phosphate + NADP(+) = (2R)-3-phospho-glyceroyl phosphate + NADPH + H(+). The catalysed reaction is D-glyceraldehyde 3-phosphate + phosphate + NAD(+) = (2R)-3-phospho-glyceroyl phosphate + NADH + H(+). The protein operates within carbohydrate degradation; glycolysis; pyruvate from D-glyceraldehyde 3-phosphate: step 1/5. In Saccharolobus islandicus (strain L.S.2.15 / Lassen #1) (Sulfolobus islandicus), this protein is Glyceraldehyde-3-phosphate dehydrogenase.